We begin with the raw amino-acid sequence, 306 residues long: MALDFLAGCAGGVAGVIVGHPFDIVKVRLQVQSTEKPQYRGTLHCFQSIIKQESVLGLYKGLGSPLMGLTFINALVFGVQGNTLRALGQDSPLNQFLAGAAAGAIQCVICCPMELAKTRLQLQAVGPARTYKGSLDCLVQIYRHEGLRGINRGMVSTLLRETPSFGVYFLTYDVMTRAMGCEPGDRLLVPKLLLAGGTSGITSWLSTYPMDVVKSRLQADGLQGTPRYRGIVDCMRQSYQAEGWQVFTRGLASTLLRAFPVNAATFATVTVVLTYTRGEEAQVDSEAALGTSPTPAGSALAQPSSL.

6 helical membrane-spanning segments follow: residues A2–F22, G61–G81, F96–A116, G153–Y172, L187–T207, and L255–Y275. Solcar repeat units follow at residues A2 to A86, D90 to A178, and P190 to Y275. Residues D284–L306 form a disordered region. Residues T291–L306 are compositionally biased toward polar residues.

This sequence belongs to the mitochondrial carrier (TC 2.A.29) family. Widely expressed, with highest levels in the brain, including cortex, cerebellum, hippocampus and hypothalamus, and moderate levels in liver, kidney, heart and testis.

It localises to the mitochondrion inner membrane. It catalyses the reaction L-lysine(out) + L-arginine(in) = L-lysine(in) + L-arginine(out). It carries out the reaction L-histidine(out) + L-arginine(in) = L-histidine(in) + L-arginine(out). The enzyme catalyses L-ornithine(in) + L-arginine(out) = L-ornithine(out) + L-arginine(in). The catalysed reaction is L-homoarginine(in) + L-arginine(out) = L-homoarginine(out) + L-arginine(in). It catalyses the reaction N(omega)-methyl-L-arginine(in) + L-arginine(out) = N(omega)-methyl-L-arginine(out) + L-arginine(in). It carries out the reaction L-arginine(in) = L-arginine(out). The enzyme catalyses L-lysine(in) = L-lysine(out). The catalysed reaction is L-ornithine(in) = L-ornithine(out). It catalyses the reaction L-histidine(out) = L-histidine(in). Functionally, mitochondrial transporter of arginine, lysine, homoarginine, methylarginine. Transports with a much lesser extent, ornithine and histidine. Does not transport carnitine nor acylcarnitines. Functions by both counter-exchange and uniport mechanisms. Plays a physiological role in the import of basic amino acids into mitochondria for mitochondrial protein synthesis and amino acid degradation. In Mus musculus (Mouse), this protein is Mitochondrial basic amino acids transporter (Slc25a29).